Here is a 183-residue protein sequence, read N- to C-terminus: Dual-action ribosomal maturation protein DarP (183 aa).

A disordered region spans residues 1 to 27; the sequence is MSSHSQEPVGEENFDDSEYDRPSKSQV. Positions 9 to 18 are enriched in acidic residues; that stretch reads VGEENFDDSE.

Belongs to the DarP family.

It is found in the cytoplasm. Functionally, member of a network of 50S ribosomal subunit biogenesis factors which assembles along the 30S-50S interface, preventing incorrect 23S rRNA structures from forming. Promotes peptidyl transferase center (PTC) maturation. This chain is Dual-action ribosomal maturation protein DarP, found in Bordetella parapertussis (strain 12822 / ATCC BAA-587 / NCTC 13253).